The following is a 186-amino-acid chain: Ribosome maturation factor RimM (186 aa).

The 72-residue stretch at 103 to 174 (PEEYHYSDLI…ELQVQPPPGL (72 aa)) folds into the PRC barrel domain.

This sequence belongs to the RimM family. As to quaternary structure, binds ribosomal protein uS19.

The protein localises to the cytoplasm. Its function is as follows. An accessory protein needed during the final step in the assembly of 30S ribosomal subunit, possibly for assembly of the head region. Essential for efficient processing of 16S rRNA. May be needed both before and after RbfA during the maturation of 16S rRNA. It has affinity for free ribosomal 30S subunits but not for 70S ribosomes. The polypeptide is Ribosome maturation factor RimM (Synechococcus sp. (strain JA-3-3Ab) (Cyanobacteria bacterium Yellowstone A-Prime)).